Consider the following 411-residue polypeptide: Dual-specificity RNA methyltransferase RlmN (411 aa).

Catalysis depends on E125, which acts as the Proton acceptor. The Radical SAM core domain maps to 131–380 (EEGRGTLCIS…IRTPRGRDIL (250 aa)). C138 and C383 form a disulfide bridge. Residues C145, C149, and C152 each contribute to the [4Fe-4S] cluster site. Residues 209 to 210 (GE), S241, 263 to 265 (SLH), and N340 contribute to the S-adenosyl-L-methionine site. The active-site S-methylcysteine intermediate is the C383.

Belongs to the radical SAM superfamily. RlmN family. [4Fe-4S] cluster serves as cofactor.

Its subcellular location is the cytoplasm. It carries out the reaction adenosine(2503) in 23S rRNA + 2 reduced [2Fe-2S]-[ferredoxin] + 2 S-adenosyl-L-methionine = 2-methyladenosine(2503) in 23S rRNA + 5'-deoxyadenosine + L-methionine + 2 oxidized [2Fe-2S]-[ferredoxin] + S-adenosyl-L-homocysteine. The enzyme catalyses adenosine(37) in tRNA + 2 reduced [2Fe-2S]-[ferredoxin] + 2 S-adenosyl-L-methionine = 2-methyladenosine(37) in tRNA + 5'-deoxyadenosine + L-methionine + 2 oxidized [2Fe-2S]-[ferredoxin] + S-adenosyl-L-homocysteine. Specifically methylates position 2 of adenine 2503 in 23S rRNA and position 2 of adenine 37 in tRNAs. m2A2503 modification seems to play a crucial role in the proofreading step occurring at the peptidyl transferase center and thus would serve to optimize ribosomal fidelity. The polypeptide is Dual-specificity RNA methyltransferase RlmN (Brucella canis (strain ATCC 23365 / NCTC 10854 / RM-666)).